Reading from the N-terminus, the 337-residue chain is Large ribosomal subunit protein uL3 (337 aa).

This sequence belongs to the universal ribosomal protein uL3 family. As to quaternary structure, part of the 50S ribosomal subunit. Forms a cluster with proteins L14 and L24e.

Its function is as follows. One of the primary rRNA binding proteins, it binds directly near the 3'-end of the 23S rRNA, where it nucleates assembly of the 50S subunit. In Methanospirillum hungatei JF-1 (strain ATCC 27890 / DSM 864 / NBRC 100397 / JF-1), this protein is Large ribosomal subunit protein uL3.